The chain runs to 237 residues: LexA repressor (237 aa).

The H-T-H motif DNA-binding region spans 26–46 (FDEMKEALDLRSKSGIHRLIT). Positions 84–110 (GFSPSVIEGGAQPKPSSRDLAPARSSG) are disordered. Residues Ser158 and Lys196 each act as for autocatalytic cleavage activity in the active site.

The protein belongs to the peptidase S24 family. In terms of assembly, homodimer.

The catalysed reaction is Hydrolysis of Ala-|-Gly bond in repressor LexA.. In terms of biological role, represses a number of genes involved in the response to DNA damage (SOS response), including recA and lexA. In the presence of single-stranded DNA, RecA interacts with LexA causing an autocatalytic cleavage which disrupts the DNA-binding part of LexA, leading to derepression of the SOS regulon and eventually DNA repair. The polypeptide is LexA repressor (Parvibaculum lavamentivorans (strain DS-1 / DSM 13023 / NCIMB 13966)).